The following is a 94-amino-acid chain: FXYD domain-containing ion transport regulator 6 (94 aa).

The signal sequence occupies residues 1–17 (METVLVLCSLLAPVVLA). The Extracellular portion of the chain corresponds to 18–34 (SAAEKEKEKDPFYYDYQ). A helical transmembrane segment spans residues 35–57 (TLRIGGLVFAVVLFSVGILLILS). Residues 58–94 (RRCKCSFNQKPRAPGDEEAQVENLITTNAAEPQKAEN) lie on the Cytoplasmic side of the membrane.

This sequence belongs to the FXYD family. Regulatory subunit of the sodium/potassium-transporting ATPase which is composed of a catalytic alpha subunit, a non-catalytic beta subunit and an additional regulatory subunit. The regulatory subunit, a member of the FXYD protein family, modulates the enzymatic activity in a tissue- and isoform-specific way by changing affinities of the Na+/K+-ATPase toward Na(+), K(+) or ATP.

The protein resides in the cell membrane. Its function is as follows. Associates with and regulates the activity of the sodium/potassium-transporting ATPase (NKA) which catalyzes the hydrolysis of ATP coupled with the exchange of Na(+) and K(+) ions across the plasma membrane. Reduces the apparent affinity for intracellular Na(+) with no change in the apparent affinity for extracellular K(+). In addition to modulating NKA kinetics, may also function as a regulator of NKA localization to the plasma membrane. The chain is FXYD domain-containing ion transport regulator 6 (Fxyd6) from Mus musculus (Mouse).